The sequence spans 496 residues: ADP-dependent glucokinase (496 aa).

The signal sequence occupies residues 1-22 (MALWRGSACAGFLALAVGCVFL). Residues 52-496 (SPESRLAAAW…GLFYSEARPD (445 aa)) enclose the ADPK domain. Mg(2+) is bound by residues glutamate 297, glutamate 328, and aspartate 481. The active-site Proton acceptor is the aspartate 481.

It belongs to the ADP-dependent glucokinase family. In terms of assembly, monomer. Mg(2+) serves as cofactor.

The protein resides in the secreted. It carries out the reaction D-glucose + ADP = D-glucose 6-phosphate + AMP + H(+). It functions in the pathway carbohydrate degradation; glycolysis. Functionally, catalyzes the phosphorylation of D-glucose to D-glucose 6-phosphate using ADP as the phosphate donor. GDP and CDP can replace ADP, but with reduced efficiency. The polypeptide is ADP-dependent glucokinase (Adpgk) (Mus musculus (Mouse)).